The following is a 1734-amino-acid chain: Protein TIC 214 (1734 aa).

Transmembrane regions (helical) follow at residues 19–39 (IINS…FSIG), 68–88 (FIAG…HLAL), 91–111 (PHTI…WNNH), 133–153 (VFLN…SSML), 176–196 (VGWL…LVWI), and 227–247 (IFSI…PSPI). Positions 1433-1485 (NLNNEEKELADEVELESDNEKQINPESALSNQEKTIQEIYAESKKKKRQNKKQ) form a coiled coil.

It belongs to the TIC214 family. As to quaternary structure, part of the Tic complex.

It localises to the plastid. The protein resides in the chloroplast inner membrane. In terms of biological role, involved in protein precursor import into chloroplasts. May be part of an intermediate translocation complex acting as a protein-conducting channel at the inner envelope. This is Protein TIC 214 from Lepidium virginicum (Virginia pepperweed).